Reading from the N-terminus, the 226-residue chain is MKMETFLVCLFHNADGLHQQIQEILYLLRMHIYETNLYLKQELSRLIYPNRQLSFVLLMPLSLLRNWDDIEYLTDVVDDKQTLHYAANLLTNYVLHLSMFQKLTKPYFLLAVKRVSEKLNKRQRHSFYEVLVTSETLNNYENLSKNILNTLMFAVRYVFKPTPNYSEILAELEKKNKIHHIIFNMVIADFAQIRKQQMDKHLCETNNELRQECKETIFDLKVVGNV.

A signal peptide spans 1–16 (MKMETFLVCLFHNADG). Asn-142 and Asn-164 each carry an N-linked (GlcNAc...) asparagine; by host glycan.

This sequence belongs to the asfivirus I226R family.

Its function is as follows. Plays a role in the inhibition of host NF-kappa-B and IRF3 signaling pathways. Mechanistically, promotes the degradation of host IKBKG through enhancing its ubiquitination leading to inhibition of both pathways. In Ornithodoros (relapsing fever ticks), this protein is Late protein I226R.